The primary structure comprises 222 residues: Ras-related protein Rab-41 (222 aa).

Residues serine 41, valine 42, glycine 43, lysine 44, threonine 45, serine 46, and threonine 63 each contribute to the GTP site. Position 45 (threonine 45) interacts with Mg(2+). Residues 58–66 (CACQATVGI) are switch-I. The Mg(2+) site is built by threonine 63 and aspartate 86. Residues glycine 89, asparagine 144, lysine 145, aspartate 147, serine 174, alanine 175, and lysine 176 each coordinate GTP. Residues 89-105 (GQERFHSLIPSYIRDST) are switch-II. A lipid anchor (S-geranylgeranyl cysteine) is attached at cysteine 222.

The protein belongs to the small GTPase superfamily. Rab family. It depends on Mg(2+) as a cofactor. As to expression, widely expressed in brain, testis, lung, heart, ovary, colon, kidney, uterus and spleen but not in liver.

It localises to the cytoplasm. The enzyme catalyses GTP + H2O = GDP + phosphate + H(+). With respect to regulation, regulated by guanine nucleotide exchange factors (GEFs) which promote the exchange of bound GDP for free GTP. Regulated by GTPase activating proteins (GAPs) which increase the GTP hydrolysis activity. Inhibited by GDP dissociation inhibitors (GDIs). The small GTPases Rab are key regulators of intracellular membrane trafficking, from the formation of transport vesicles to their fusion with membranes. Rabs cycle between an inactive GDP-bound form and an active GTP-bound form that is able to recruit to membranes different sets of downstream effectors directly responsible for vesicle formation, movement, tethering and fusion. RAB41 is required for normal Golgi ribbon organization and ER-to-Golgi trafficking. This chain is Ras-related protein Rab-41, found in Homo sapiens (Human).